A 355-amino-acid polypeptide reads, in one-letter code: MATTGLFEMNDKGKADKQKALECALAQIERQFGKGSIMKLGGDTPPPEIEATSTGSLGLDIALGIGGLPKGRIVEIYGPESSGKTTLTLHCIAEEQKKGGVCAFVDAEHALDPYYAKKLGVSLEDLLISQPDTGEQALEIVDTLVRSGAVSLVVVDSVAALTPKAEIEGDMGDATVGAQARLMSQAMRKLTASIGRSNCMVIFINQIRMKIGVMFGSPETTSGGNALKFYASVRLDIRRTGAIKDRDEVIGNQTRVKVVKNKVAPPFREVEFDILYGEGISKVGELVDLGVKAGVVAKSGAWYSYGDERIGQGRENAKQFLRDNPDIAYEIEDKIRASHGLEFGVDPTAEDLTEE.

Residue 78–85 coordinates ATP; the sequence is GPESSGKT.

This sequence belongs to the RecA family.

The protein resides in the cytoplasm. Can catalyze the hydrolysis of ATP in the presence of single-stranded DNA, the ATP-dependent uptake of single-stranded DNA by duplex DNA, and the ATP-dependent hybridization of homologous single-stranded DNAs. It interacts with LexA causing its activation and leading to its autocatalytic cleavage. This Rhodobacter capsulatus (Rhodopseudomonas capsulata) protein is Protein RecA.